Here is a 512-residue protein sequence, read N- to C-terminus: GMP synthase [glutamine-hydrolyzing] (512 aa).

Residues 9 to 198 (GVLVVDFGGQ…WLSLVGAPRT (190 aa)) enclose the Glutamine amidotransferase type-1 domain. Cys87 functions as the Nucleophile in the catalytic mechanism. Active-site residues include His173 and Glu175. A GMPS ATP-PPase domain is found at 199–387 (WRPGDMVSEL…LGVPRELIWK (189 aa)). ATP is bound at residue 226-232 (SGGVDST).

The catalysed reaction is XMP + L-glutamine + ATP + H2O = GMP + L-glutamate + AMP + diphosphate + 2 H(+). It participates in purine metabolism; GMP biosynthesis; GMP from XMP (L-Gln route): step 1/1. In terms of biological role, catalyzes the synthesis of GMP from XMP. This chain is GMP synthase [glutamine-hydrolyzing] (guaA), found in Aeropyrum pernix (strain ATCC 700893 / DSM 11879 / JCM 9820 / NBRC 100138 / K1).